A 419-amino-acid chain; its full sequence is DNA-directed RNA polymerase I subunit RPA49 (419 aa).

Phosphoserine is present on residues serine 35 and serine 163. At lysine 373 the chain carries N6-acetyllysine. Residues 397–419 form a disordered region; it reads GTLSLPLPPAQTSDRLAKRRKIT.

Belongs to the eukaryotic RPA49/POLR1E RNA polymerase subunit family. In terms of assembly, component of the RNA polymerase I (Pol I) complex consisting of 13 subunits: a ten-subunit catalytic core composed of POLR1A/RPA1, POLR1B/RPA2, POLR1C/RPAC1, POLR1D/RPAC2, POLR1H/RPA12, POLR2E/RPABC1, POLR2F/RPABC2, POLR2H/RPABC3, POLR2K/RPABC4 and POLR2L/RPABC5; a mobile stalk subunit POLR1F/RPA43 protruding from the core and additional subunits homologous to general transcription factors POLR1E/RPA49 and POLR1G/RPA34. Forms a heterodimer with POLR1G/RPA34. Interacts with POLR1G. Also binds UBTF/UBF. Interacts with PWP1. Acetylated at Lys-373 by CREBBP/CBP, leading to decreased RNA polymerase I transcription. In normal conditions, deacetylated by SIRT7, promoting the association of RNA polymerase I with the rDNA promoter region and coding region. In response to stress, SIRT7 is released from nucleoli leading to hyperacetylation of POLR1E/PAF53 and decreased association of RNA polymerase I with the rDNA promoter region.

It is found in the nucleus. The protein resides in the nucleolus. In terms of biological role, component of RNA polymerase I (Pol I), a DNA-dependent RNA polymerase which synthesizes ribosomal RNA precursors using the four ribonucleoside triphosphates as substrates. Appears to be involved in the formation of the initiation complex at the promoter by mediating the interaction between Pol I and UBTF/UBF. In Homo sapiens (Human), this protein is DNA-directed RNA polymerase I subunit RPA49 (POLR1E).